Reading from the N-terminus, the 425-residue chain is MHDIRLIRSEPENFDKALSRRGFEPVSKTILEMDGERRTLALELQTLQTKRNEVSRQIGQAMKQGEKDKAEEMKAEVSAIKEKMAALEGEEAALGDKLQRFLSTIPNLAAEDVPEGKDEQDNKEVFRWGEPRQFSFKPKEHADFAPALGLDFDTAAAMSGARFALMKGAMARLNRAIGQYMLDCQTEKNGFTEIAPPLLVRDHALFGTGQLPKFEEDLFHTTDDRWLIPTAEVCLTNIVRESILDEKALPLRFTALTPCFRAEAGAAGRDTRGLIRQHQFDKVEMVAITTPEQSTAEQMRMVECAEQILQNLKLPYRRVLLCTGDMGFSATRTYDLEVWLPGQNCYREISSISDCGAFQARRMNTRYRPEEGKGNAAVHTLNGSGLAVGRTLVAILENYQEEDGTVTIPEVLHPYMNGITKLEII.

L-serine is bound at residue 230–232 (TAE). ATP is bound at residue 261–263 (RAE). Residue Glu-284 coordinates L-serine. 348–351 (EISS) is a binding site for ATP. Ser-384 lines the L-serine pocket.

It belongs to the class-II aminoacyl-tRNA synthetase family. Type-1 seryl-tRNA synthetase subfamily. Homodimer. The tRNA molecule binds across the dimer.

The protein localises to the cytoplasm. The enzyme catalyses tRNA(Ser) + L-serine + ATP = L-seryl-tRNA(Ser) + AMP + diphosphate + H(+). The catalysed reaction is tRNA(Sec) + L-serine + ATP = L-seryl-tRNA(Sec) + AMP + diphosphate + H(+). The protein operates within aminoacyl-tRNA biosynthesis; selenocysteinyl-tRNA(Sec) biosynthesis; L-seryl-tRNA(Sec) from L-serine and tRNA(Sec): step 1/1. In terms of biological role, catalyzes the attachment of serine to tRNA(Ser). Is also able to aminoacylate tRNA(Sec) with serine, to form the misacylated tRNA L-seryl-tRNA(Sec), which will be further converted into selenocysteinyl-tRNA(Sec). This is Serine--tRNA ligase from Zymomonas mobilis subsp. mobilis (strain ATCC 31821 / ZM4 / CP4).